We begin with the raw amino-acid sequence, 578 residues long: Arginine--tRNA ligase (578 aa).

The 'HIGH' region signature appears at 127–137 (PNLAKEMHVGH).

Belongs to the class-I aminoacyl-tRNA synthetase family. In terms of assembly, monomer.

It localises to the cytoplasm. The catalysed reaction is tRNA(Arg) + L-arginine + ATP = L-arginyl-tRNA(Arg) + AMP + diphosphate. The chain is Arginine--tRNA ligase from Pseudomonas savastanoi pv. phaseolicola (strain 1448A / Race 6) (Pseudomonas syringae pv. phaseolicola (strain 1448A / Race 6)).